The chain runs to 2313 residues: Cell surface glycoprotein 1 (2313 aa).

A signal peptide spans 1-28 (MKRKNKVLSILLTLLLIISTTSVNMSFA). Cohesin domains follow at residues 34–197 (IEMV…VVEA) and 205–367 (VALE…EIVV). A compositionally biased stretch (acidic residues) spans 369 to 378 (GEEPGEEPTE). The tract at residues 369 to 400 (GEEPGEEPTEEPVPTETSVDPTPTVTEEPVPS) is disordered. Low complexity predominate over residues 380 to 400 (PVPTETSVDPTPTVTEEPVPS). A Cohesin 3 domain is found at 407–569 (VIMELDKTKV…SVVQPGEIVV (163 aa)). The span at 571-580 (GEEPGEEPTE) shows a compositional bias: acidic residues. Residues 571–602 (GEEPGEEPTEEPVPTETSVDPTPTVTEEPVPS) form a disordered region. Residues 582-602 (PVPTETSVDPTPTVTEEPVPS) show a composition bias toward low complexity. In terms of domain architecture, Cohesin 4 spans 609 to 771 (VIMELDKTKV…SVVQPGEIVA (163 aa)). Residues 772-782 (EGEEPGEEPTE) are compositionally biased toward acidic residues. The interval 772-805 (EGEEPGEEPTEEPVPTETSADPTPTVTEEPVPSE) is disordered. Positions 784–803 (PVPTETSADPTPTVTEEPVP) are enriched in low complexity. The Cohesin 5 domain occupies 811–973 (VIMELDKTKV…SVVQPGEIVA (163 aa)). Acidic residues predominate over residues 974–984 (EGEEPGEEPTE). The segment at 974-1007 (EGEEPGEEPTEEPVPTETPVDPTPTVTEEPVPSE) is disordered. Residues 986–1007 (PVPTETPVDPTPTVTEEPVPSE) show a composition bias toward low complexity. In terms of domain architecture, Cohesin 6 spans 1013 to 1175 (VIMELDKTKV…SVVQPGEIVA (163 aa)). 2 disordered regions span residues 1177-1203 (GEEP…EPVP) and 1374-2111 (ASDE…PDGS). The span at 1184–1203 (PVPTETPVDPTPTVTEEPVP) shows a compositional bias: low complexity. Residues 1211-1375 (VIMELDKTKV…IQPAPIKAAS (165 aa)) enclose the Cohesin 7 domain. Residues 1376–1390 (DEPIPTDTPSDEPTP) are compositionally biased toward low complexity. Positions 1383–2025 (TPSDEPTPSD…SDEPTPSETP (643 aa)) are approximate tandem repeats of T-P-S-D-E-P. Over residues 1391–1411 (SDEPTPSDEPTPSDEPTPSDE) the composition is skewed to pro residues. Residues 1423–1433 (PTDTPSDEPTP) are compositionally biased toward low complexity. Positions 1434–1454 (SDEPTPSDEPTPSDEPTPSDE) are enriched in pro residues. Residues 1466–1476 (PTDTPSDEPTP) show a composition bias toward low complexity. A compositionally biased stretch (pro residues) spans 1477–1497 (SDEPTPSDEPTPSDEPTPSDE). A compositionally biased stretch (low complexity) spans 1509–1519 (PTDTPSDEPTP). The segment covering 1520–1540 (SDEPTPSDEPTPSDEPTPSDE) has biased composition (pro residues). Over residues 1552 to 1562 (PTDTPSDEPTP) the composition is skewed to low complexity. A compositionally biased stretch (pro residues) spans 1563–1595 (SDEPTPSDEPTPSDEPTPSDEPTPSDEPTPSDE). Low complexity predominate over residues 1607-1617 (PTDTPSDEPTP). Pro residues predominate over residues 1618-1650 (SDEPTPSDEPTPSDEPTPSDEPTPSDEPTPSDE). Over residues 1662–1672 (PTDTPSDEPTP) the composition is skewed to low complexity. A compositionally biased stretch (pro residues) spans 1673–1693 (SDEPTPSDEPTPSDEPTPSDE). A compositionally biased stretch (low complexity) spans 1705–1715 (PTDTPSDEPTP). Residues 1716 to 1736 (SDEPTPSDEPTPSDEPTPSDE) show a composition bias toward pro residues. Over residues 1748-1758 (PTDTPSDEPTP) the composition is skewed to low complexity. Pro residues predominate over residues 1759 to 1779 (SDEPTPSDEPTPSDEPTPSDE). Over residues 1791-1801 (PTDTPSDEPTP) the composition is skewed to low complexity. A compositionally biased stretch (pro residues) spans 1802-1822 (SDEPTPSDEPTPSDEPTPSDE). Residues 1834-1844 (PTDTPSDEPTP) are compositionally biased toward low complexity. A compositionally biased stretch (pro residues) spans 1845–1865 (SDEPTPSDEPTPSDEPTPSDE). Positions 1877 to 1887 (PTDTPSDEPTP) are enriched in low complexity. Pro residues predominate over residues 1888-1908 (SDEPTPSDEPTPSDEPTPSDE). A compositionally biased stretch (low complexity) spans 1920–1930 (PTDTPSDEPTP). Residues 1931-1963 (SDEPTPSDEPTPSDEPTPSDEPTPSDEPTPSDE) show a composition bias toward pro residues. A compositionally biased stretch (low complexity) spans 1975 to 1985 (PTDTPSDEPTP). 2 stretches are compositionally biased toward pro residues: residues 1986 to 2018 (SDEP…PSDE) and 2027 to 2039 (EPTP…PTPS). Over residues 2045–2062 (GSGGSGGSGGGGGGGGGT) the composition is skewed to gly residues. SLH domains lie at 2067–2140 (PTPT…YGAQ), 2141–2204 (SASP…EIMS), and 2211–2274 (ISNP…GAPK). Positions 2073–2082 (SKPTSTPAPT) are enriched in low complexity.

In terms of assembly, assembled into mono-layered crystalline arrays.

The protein localises to the secreted. Its subcellular location is the cell wall. The protein resides in the S-layer. The chain is Cell surface glycoprotein 1 (olpB) from Acetivibrio thermocellus (strain ATCC 27405 / DSM 1237 / JCM 9322 / NBRC 103400 / NCIMB 10682 / NRRL B-4536 / VPI 7372) (Clostridium thermocellum).